Consider the following 1271-residue polypeptide: ATP-dependent helicase/nuclease subunit A (1271 aa).

Residues 3–476 form the UvrD-like helicase ATP-binding domain; the sequence is TKWTEEQELA…IMLYKNFRSR (474 aa). 24-31 serves as a coordination point for ATP; that stretch reads AAAGSGKT. Residues 528-824 form the UvrD-like helicase C-terminal domain; sequence IENLKVAGDI…RIMSIHKSKG (297 aa).

The protein belongs to the helicase family. AddA subfamily. Heterodimer of AddA and AddB/RexB. The cofactor is Mg(2+).

The enzyme catalyses Couples ATP hydrolysis with the unwinding of duplex DNA by translocating in the 3'-5' direction.. It carries out the reaction ATP + H2O = ADP + phosphate + H(+). The heterodimer acts as both an ATP-dependent DNA helicase and an ATP-dependent, dual-direction single-stranded exonuclease. Recognizes the chi site generating a DNA molecule suitable for the initiation of homologous recombination. The AddA nuclease domain is required for chi fragment generation; this subunit has the helicase and 3' -&gt; 5' nuclease activities. This chain is ATP-dependent helicase/nuclease subunit A, found in Clostridium perfringens (strain ATCC 13124 / DSM 756 / JCM 1290 / NCIMB 6125 / NCTC 8237 / Type A).